A 156-amino-acid chain; its full sequence is Small ribosomal subunit protein uS7 (156 aa).

Belongs to the universal ribosomal protein uS7 family. In terms of assembly, part of the 30S ribosomal subunit. Contacts proteins S9 and S11.

Functionally, one of the primary rRNA binding proteins, it binds directly to 16S rRNA where it nucleates assembly of the head domain of the 30S subunit. Is located at the subunit interface close to the decoding center, probably blocks exit of the E-site tRNA. This chain is Small ribosomal subunit protein uS7, found in Burkholderia multivorans (strain ATCC 17616 / 249).